Here is a 183-residue protein sequence, read N- to C-terminus: dCTP deaminase, dUMP-forming (183 aa).

DCTP-binding positions include 99 to 104 (KSSIAR), Asp-117, 125 to 127 (TLE), Gln-146, Tyr-159, Lys-166, and Gln-170. Glu-127 functions as the Proton donor/acceptor in the catalytic mechanism.

This sequence belongs to the dCTP deaminase family. Homotrimer.

It carries out the reaction dCTP + 2 H2O = dUMP + NH4(+) + diphosphate. It functions in the pathway pyrimidine metabolism; dUMP biosynthesis; dUMP from dCTP: step 1/1. In terms of biological role, bifunctional enzyme that catalyzes both the deamination of dCTP to dUTP and the hydrolysis of dUTP to dUMP without releasing the toxic dUTP intermediate. The sequence is that of dCTP deaminase, dUMP-forming from Methanoregula boonei (strain DSM 21154 / JCM 14090 / 6A8).